The chain runs to 334 residues: Holliday junction branch migration complex subunit RuvB (334 aa).

The segment at 1–181 is large ATPase domain (RuvB-L); it reads MTRILDNDLM…FGITGHMEYY (181 aa). Residues leucine 20, arginine 21, glycine 62, lysine 65, threonine 66, threonine 67, 128–130, arginine 171, tyrosine 181, and arginine 218 contribute to the ATP site; that span reads EDF. Position 66 (threonine 66) interacts with Mg(2+). Residues 182–252 are small ATPAse domain (RuvB-S); sequence QVDDLTEIVE…MTDKALEMLD (71 aa). Positions 255–334 are head domain (RuvB-H); that stretch reads HEGLDYVDQK…LKYPLDTKTE (80 aa). Positions 291, 310, 312, and 315 each coordinate DNA.

It belongs to the RuvB family. In terms of assembly, homohexamer. Forms an RuvA(8)-RuvB(12)-Holliday junction (HJ) complex. HJ DNA is sandwiched between 2 RuvA tetramers; dsDNA enters through RuvA and exits via RuvB. An RuvB hexamer assembles on each DNA strand where it exits the tetramer. Each RuvB hexamer is contacted by two RuvA subunits (via domain III) on 2 adjacent RuvB subunits; this complex drives branch migration. In the full resolvosome a probable DNA-RuvA(4)-RuvB(12)-RuvC(2) complex forms which resolves the HJ.

The protein resides in the cytoplasm. The enzyme catalyses ATP + H2O = ADP + phosphate + H(+). In terms of biological role, the RuvA-RuvB-RuvC complex processes Holliday junction (HJ) DNA during genetic recombination and DNA repair, while the RuvA-RuvB complex plays an important role in the rescue of blocked DNA replication forks via replication fork reversal (RFR). RuvA specifically binds to HJ cruciform DNA, conferring on it an open structure. The RuvB hexamer acts as an ATP-dependent pump, pulling dsDNA into and through the RuvAB complex. RuvB forms 2 homohexamers on either side of HJ DNA bound by 1 or 2 RuvA tetramers; 4 subunits per hexamer contact DNA at a time. Coordinated motions by a converter formed by DNA-disengaged RuvB subunits stimulates ATP hydrolysis and nucleotide exchange. Immobilization of the converter enables RuvB to convert the ATP-contained energy into a lever motion, pulling 2 nucleotides of DNA out of the RuvA tetramer per ATP hydrolyzed, thus driving DNA branch migration. The RuvB motors rotate together with the DNA substrate, which together with the progressing nucleotide cycle form the mechanistic basis for DNA recombination by continuous HJ branch migration. Branch migration allows RuvC to scan DNA until it finds its consensus sequence, where it cleaves and resolves cruciform DNA. The chain is Holliday junction branch migration complex subunit RuvB from Streptococcus uberis (strain ATCC BAA-854 / 0140J).